A 364-amino-acid polypeptide reads, in one-letter code: Mannose-1-phosphate guanyltransferase (364 aa).

This sequence belongs to the transferase hexapeptide repeat family.

It localises to the cytoplasm. It carries out the reaction alpha-D-mannose 1-phosphate + GTP + H(+) = GDP-alpha-D-mannose + diphosphate. Its pathway is nucleotide-sugar biosynthesis; GDP-alpha-D-mannose biosynthesis; GDP-alpha-D-mannose from alpha-D-mannose 1-phosphate (GTP route): step 1/1. In terms of biological role, involved in cell wall synthesis where it is required for glycosylation. Involved in cell cycle progression through cell-size checkpoint. The chain is Mannose-1-phosphate guanyltransferase (MPG1) from Gibberella zeae (strain ATCC MYA-4620 / CBS 123657 / FGSC 9075 / NRRL 31084 / PH-1) (Wheat head blight fungus).